A 519-amino-acid polypeptide reads, in one-letter code: Xylose import ATP-binding protein XylG (519 aa).

ABC transporter domains are found at residues 6–245 and 262–507; these read LTMR…VGRE and LDVR…LKPA. Residue 38–45 coordinates ATP; it reads GENGAGKS.

It belongs to the ABC transporter superfamily. Xylose importer (TC 3.A.1.2.4) family. The complex is composed of two ATP-binding proteins (XylG), two transmembrane proteins (XylH) and a solute-binding protein (XylF).

The protein localises to the cell inner membrane. It carries out the reaction D-xylose(out) + ATP + H2O = D-xylose(in) + ADP + phosphate + H(+). Its function is as follows. Part of the ABC transporter complex XylFGH involved in xylose import. Responsible for energy coupling to the transport system. In Burkholderia cenocepacia (strain HI2424), this protein is Xylose import ATP-binding protein XylG.